We begin with the raw amino-acid sequence, 185 residues long: Ribosome-recycling factor (185 aa).

The protein belongs to the RRF family.

It localises to the cytoplasm. Its function is as follows. Responsible for the release of ribosomes from messenger RNA at the termination of protein biosynthesis. May increase the efficiency of translation by recycling ribosomes from one round of translation to another. This Tolumonas auensis (strain DSM 9187 / NBRC 110442 / TA 4) protein is Ribosome-recycling factor.